A 232-amino-acid polypeptide reads, in one-letter code: Large ribosomal subunit protein uL1 (232 aa).

It belongs to the universal ribosomal protein uL1 family. As to quaternary structure, part of the 50S ribosomal subunit.

Functionally, binds directly to 23S rRNA. The L1 stalk is quite mobile in the ribosome, and is involved in E site tRNA release. Its function is as follows. Protein L1 is also a translational repressor protein, it controls the translation of the L11 operon by binding to its mRNA. In Lysinibacillus sphaericus (strain C3-41), this protein is Large ribosomal subunit protein uL1.